We begin with the raw amino-acid sequence, 141 residues long: Putative pre-16S rRNA nuclease (141 aa).

Belongs to the YqgF nuclease family.

It is found in the cytoplasm. Its function is as follows. Could be a nuclease involved in processing of the 5'-end of pre-16S rRNA. This Sodalis glossinidius (strain morsitans) protein is Putative pre-16S rRNA nuclease.